The sequence spans 72 residues: DNA-directed RNA polymerase subunit Rpo10 (72 aa).

Positions 7, 10, 45, and 46 each coordinate Zn(2+).

The protein belongs to the archaeal Rpo10/eukaryotic RPB10 RNA polymerase subunit family. In terms of assembly, part of the RNA polymerase complex. Zn(2+) is required as a cofactor.

Its subcellular location is the cytoplasm. It catalyses the reaction RNA(n) + a ribonucleoside 5'-triphosphate = RNA(n+1) + diphosphate. DNA-dependent RNA polymerase (RNAP) catalyzes the transcription of DNA into RNA using the four ribonucleoside triphosphates as substrates. The protein is DNA-directed RNA polymerase subunit Rpo10 of Methanopyrus kandleri (strain AV19 / DSM 6324 / JCM 9639 / NBRC 100938).